A 164-amino-acid polypeptide reads, in one-letter code: 3-isopropylmalate dehydratase small subunit 1 (164 aa).

The protein belongs to the LeuD family. LeuD type 2 subfamily. In terms of assembly, heterodimer of LeuC and LeuD.

It catalyses the reaction (2R,3S)-3-isopropylmalate = (2S)-2-isopropylmalate. Its pathway is amino-acid biosynthesis; L-leucine biosynthesis; L-leucine from 3-methyl-2-oxobutanoate: step 2/4. In terms of biological role, catalyzes the isomerization between 2-isopropylmalate and 3-isopropylmalate, via the formation of 2-isopropylmaleate. The chain is 3-isopropylmalate dehydratase small subunit 1 (leuD1) from Pyrococcus furiosus (strain ATCC 43587 / DSM 3638 / JCM 8422 / Vc1).